We begin with the raw amino-acid sequence, 1703 residues long: Arf-GAP with Rho-GAP domain, ANK repeat and PH domain-containing protein 2 (1703 aa).

In terms of domain architecture, SAM spans 6–70 (EVNADIRDFL…LKQLQMIFSK (65 aa)). Tyr77 is modified (phosphotyrosine). Disordered stretches follow at residues 84–132 (KNGS…LSEG), 191–232 (EEHT…NGTN), and 286–319 (PVPEIPGSTKSIPGSYFRDRRSNTTSAGKSLTLK). 3 stretches are compositionally biased toward polar residues: residues 85 to 103 (NGSTTKEQQHSDPSSSTHT), 123 to 132 (MVTTSTLSEG), and 197 to 214 (GNLTSEDSSKALSTNTEC). The span at 222–232 (TSGTHSGNGTN) shows a compositional bias: low complexity. Polar residues predominate over residues 308–319 (NTTSAGKSLTLK). PH domains lie at 480–572 (AKEK…SALK) and 585–677 (APEK…QSIA). The 136-residue stretch at 674-809 (QSIAETLSDY…TLLASLTKEE (136 aa)) folds into the Arf-GAP domain. A C4-type zinc finger spans residues 698 to 721 (CADCKAPDPDWASINLCVVICKKC). PH domains follow at residues 899–1001 (QTAA…KRFV) and 1012–1110 (DYDL…KAAG). In terms of domain architecture, Rho-GAP spans 1114–1295 (NALQDQQLCK…DLINNYVEIF (182 aa)). Positions 1324 to 1418 (GDLLIEVFVE…AYLVVKRFLT (95 aa)) constitute a Ras-associating domain. The PH 5 domain occupies 1428–1531 (KSIKEGILKL…WMASIFIAQH (104 aa)). Phosphoserine is present on Ser1627. Disordered regions lie at residues 1633 to 1670 (DTEAEGPHGLPKAYKGPKTLKKTEERNSKATLDADPKL) and 1684 to 1703 (RSRPLHKELPDEQTLQKEVK). Composition is skewed to basic and acidic residues over residues 1653–1670 (KKTEERNSKATLDADPKL) and 1688–1703 (LHKELPDEQTLQKEVK).

Its subcellular location is the cytoplasm. In terms of biological role, phosphatidylinositol 3,4,5-trisphosphate-dependent GTPase-activating protein that modulates actin cytoskeleton remodeling by regulating ARF and RHO family members. Is activated by phosphatidylinositol 3,4,5-trisphosphate (PtdIns(3,4,5)P3) binding. Can be activated by phosphatidylinositol 3,4-bisphosphate (PtdIns(3,4,5)P2) binding, albeit with lower efficiency. This chain is Arf-GAP with Rho-GAP domain, ANK repeat and PH domain-containing protein 2 (Arap2), found in Mus musculus (Mouse).